Here is a 690-residue protein sequence, read N- to C-terminus: Amino-acid acetyltransferase, mitochondrial (690 aa).

Positions arginine 62–glycine 93 are disordered. The span at arginine 75 to glutamine 84 shows a compositional bias: polar residues. The region spanning aspartate 508–glutamine 679 is the N-acetyltransferase domain.

This sequence belongs to the acetyltransferase family.

The protein resides in the mitochondrion. The catalysed reaction is L-glutamate + acetyl-CoA = N-acetyl-L-glutamate + CoA + H(+). It participates in amino-acid biosynthesis; L-arginine biosynthesis; N(2)-acetyl-L-ornithine from L-glutamate: step 1/4. N-acetylglutamate synthase involved in arginine biosynthesis. In Talaromyces stipitatus (strain ATCC 10500 / CBS 375.48 / QM 6759 / NRRL 1006) (Penicillium stipitatum), this protein is Amino-acid acetyltransferase, mitochondrial (arg2).